Reading from the N-terminus, the 233-residue chain is tRNA (guanine-N(7)-)-methyltransferase (233 aa).

The S-adenosyl-L-methionine site is built by E62, E87, D114, and D136. The active site involves D136. Substrate is bound by residues K140, D172, and 211-214 (TRYE).

This sequence belongs to the class I-like SAM-binding methyltransferase superfamily. TrmB family.

It catalyses the reaction guanosine(46) in tRNA + S-adenosyl-L-methionine = N(7)-methylguanosine(46) in tRNA + S-adenosyl-L-homocysteine. Its pathway is tRNA modification; N(7)-methylguanine-tRNA biosynthesis. Its function is as follows. Catalyzes the formation of N(7)-methylguanine at position 46 (m7G46) in tRNA. The sequence is that of tRNA (guanine-N(7)-)-methyltransferase from Erythrobacter litoralis (strain HTCC2594).